The chain runs to 81 residues: RNA-binding protein Hfq (81 aa).

The Sm domain occupies 10 to 69; sequence DPFLNTLRREHVPVSIYLVNGIKLQGQIESFDQYVVLLRNTVTQMVYKHAISTIVPGRAV.

Belongs to the Hfq family. Homohexamer.

Its function is as follows. RNA chaperone that binds small regulatory RNA (sRNAs) and mRNAs to facilitate mRNA translational regulation in response to envelope stress, environmental stress and changes in metabolite concentrations. Also binds with high specificity to tRNAs. This Variovorax paradoxus (strain S110) protein is RNA-binding protein Hfq.